Here is a 372-residue protein sequence, read N- to C-terminus: GTPase Obg (372 aa).

The Obg domain maps to 1 to 159 (MKFIDEARIE…RMLKLELKVL (159 aa)). Positions 128 to 147 (LHFKSSTNRAPRQKTDGKPG) are disordered. One can recognise an OBG-type G domain in the interval 160-334 (ADVGLLGMPN…LVYAIHDYLV (175 aa)). GTP is bound by residues 166 to 173 (GMPNAGKS), 191 to 195 (FTTLA), 213 to 216 (DIPG), 284 to 287 (NKLD), and 315 to 317 (SAL). Residues serine 173 and threonine 193 each coordinate Mg(2+).

Belongs to the TRAFAC class OBG-HflX-like GTPase superfamily. OBG GTPase family. Monomer. Mg(2+) is required as a cofactor.

The protein resides in the cytoplasm. Functionally, an essential GTPase which binds GTP, GDP and possibly (p)ppGpp with moderate affinity, with high nucleotide exchange rates and a fairly low GTP hydrolysis rate. Plays a role in control of the cell cycle, stress response, ribosome biogenesis and in those bacteria that undergo differentiation, in morphogenesis control. This chain is GTPase Obg, found in Burkholderia pseudomallei (strain 668).